The following is a 465-amino-acid chain: MSTGKIIQVIGAVVDVEFPQETVPNIYSALIVTAKNLTMEVQQQIGGGVVRCIAMGASDGLSRGLDVTDTGKPITVPVGTATLGRIMNVLGEPIDMCGEIGATEHYGIHREAPTYEEQSASVATLEVGIKVIDLICPFSKGGKIGLFGGAGVGKTVNMMELINNIALKHSGLSVFAGVGERTREGNDFYFEMQEAGVVNVEKPELSKVAMVYGQMNEPPGNRLRVALTGLTMAERFRDEGKDVLLFIDNIYRYTLAGTEVSALLGRMPSAVGYQPTLAEEMGVLQERITSTKTGSITSIQAVYVPADDLTDPAPATTFAHLDATVVLNRSIASMGLYPAIDPLDSTSRQLDPLVVGQEHYDIARGVQGTLQRYKELKDIIAILGMDELSEDDKLVVSRARKIGNFLTQAYHVAEVFTGDPGMYVPLKDTLAGFKGLLAGDYDDLPEQAFLYIGAIEEAVEKAKKM.

148–155 (GGAGVGKT) provides a ligand contact to ATP.

This sequence belongs to the ATPase alpha/beta chains family. As to quaternary structure, F-type ATPases have 2 components, CF(1) - the catalytic core - and CF(0) - the membrane proton channel. CF(1) has five subunits: alpha(3), beta(3), gamma(1), delta(1), epsilon(1). CF(0) has three main subunits: a(1), b(2) and c(9-12). The alpha and beta chains form an alternating ring which encloses part of the gamma chain. CF(1) is attached to CF(0) by a central stalk formed by the gamma and epsilon chains, while a peripheral stalk is formed by the delta and b chains.

The protein localises to the cell inner membrane. The catalysed reaction is ATP + H2O + 4 H(+)(in) = ADP + phosphate + 5 H(+)(out). Its function is as follows. Produces ATP from ADP in the presence of a proton gradient across the membrane. The catalytic sites are hosted primarily by the beta subunits. This chain is ATP synthase subunit beta 2, found in Psychromonas ingrahamii (strain DSM 17664 / CCUG 51855 / 37).